The sequence spans 189 residues: Peptidyl-tRNA hydrolase (189 aa).

Tyr15 is a tRNA binding site. The Proton acceptor role is filled by His20. Positions 66, 68, and 114 each coordinate tRNA.

This sequence belongs to the PTH family. Monomer.

The protein resides in the cytoplasm. The catalysed reaction is an N-acyl-L-alpha-aminoacyl-tRNA + H2O = an N-acyl-L-amino acid + a tRNA + H(+). In terms of biological role, hydrolyzes ribosome-free peptidyl-tRNAs (with 1 or more amino acids incorporated), which drop off the ribosome during protein synthesis, or as a result of ribosome stalling. Catalyzes the release of premature peptidyl moieties from peptidyl-tRNA molecules trapped in stalled 50S ribosomal subunits, and thus maintains levels of free tRNAs and 50S ribosomes. This is Peptidyl-tRNA hydrolase from Streptococcus pneumoniae (strain P1031).